The primary structure comprises 480 residues: Probable efflux pump outer membrane protein SepC (480 aa).

An N-terminal signal peptide occupies residues 1-16 (MKTHYLSIALSVALSG). The N-palmitoyl cysteine moiety is linked to residue cysteine 17. Cysteine 17 carries S-diacylglycerol cysteine lipidation.

It belongs to the outer membrane factor (OMF) (TC 1.B.17) family.

The protein localises to the cell outer membrane. In terms of biological role, probable outer membrane component of the SepABC efflux pump with unknown specificity. The sequence is that of Probable efflux pump outer membrane protein SepC (sepC) from Pseudomonas putida (strain ATCC 700007 / DSM 6899 / JCM 31910 / BCRC 17059 / LMG 24140 / F1).